Consider the following 466-residue polypeptide: UDP-N-acetylglucosamine--dolichyl-phosphate N-acetylglucosaminephosphotransferase (466 aa).

Residues 12-32 (AAFAVAAHAPVLGLILLGSIV) traverse the membrane as a helical segment. A UDP-N-acetyl-alpha-D-glucosamine-binding site is contributed by aspartate 57. Asparagine 59 carries an N-linked (GlcNAc...) asparagine glycan. Residue glutamate 90 coordinates UDP-N-acetyl-alpha-D-glucosamine. Transmembrane regions (helical) follow at residues 91–111 (SLGILVGAMYLSVVVVLTVCL) and 124–144 (PYASLPGPLMTITVMLLLGFV). Lysine 155 is a dolichyl phosphate binding site. The next 2 membrane-spanning stretches (helical) occupy residues 156 to 176 (IILTALGSLPLIMTYDGSLSV) and 236 to 256 (GAALIYLGPVYLVYLSMLCIF). 255-263 (IFCTNSINI) lines the dolichyl phosphate pocket. A Mg(2+)-binding site is contributed by asparagine 262. The next 4 membrane-spanning stretches (helical) occupy residues 263–283 (ILAGVNGVEVGQSIVIAVASV), 316–336 (DHQLRALLLLGPFIGVSLALW), 345–365 (VFVGDSYTYFAGTVLAVSSIT), and 374–394 (LFFAPQVFNFLISLPQLFSIV). Position 268 (asparagine 268) interacts with UDP-N-acetyl-alpha-D-glucosamine. Position 349 (aspartate 349) interacts with Mg(2+). Position 398-400 (398-400 (RHR)) interacts with UDP-N-acetyl-alpha-D-glucosamine. N-linked (GlcNAc...) asparagine glycosylation occurs at asparagine 416. Residues 442–462 (CQVIACVLGFVVRYVLSAFLY) form a helical membrane-spanning segment.

This sequence belongs to the glycosyltransferase 4 family. Requires Mg(2+) as cofactor.

It localises to the endoplasmic reticulum membrane. It catalyses the reaction a di-trans,poly-cis-dolichyl phosphate + UDP-N-acetyl-alpha-D-glucosamine = an N-acetyl-alpha-D-glucosaminyl-diphospho-di-trans,poly-cis-dolichol + UMP. Its pathway is protein modification; protein glycosylation. With respect to regulation, inhibited by natural nucleoside antibiotic tunicamycin, which acts as a structural analog and competitor of UDP-GlcNAc. UDP-N-acetylglucosamine--dolichyl-phosphate N-acetylglucosaminephosphotransferase that operates in the biosynthetic pathway of dolichol-linked oligosaccharides, the glycan precursors employed in protein asparagine (N)-glycosylation. The assembly of dolichol-linked oligosaccharides begins on the cytosolic side of the endoplasmic reticulum membrane and finishes in its lumen. The sequential addition of sugars to dolichol pyrophosphate produces dolichol-linked oligosaccharides containing fourteen sugars, including two GlcNAcs, nine mannoses and three glucoses. Once assembled, the oligosaccharide is transferred from the lipid to nascent proteins by oligosaccharyltransferases. Catalyzes the initial step of dolichol-linked oligosaccharide biosynthesis, transfering GlcNAc-1-P from cytosolic UDP-GlcNAc onto the carrier lipid dolichyl phosphate (P-dolichol), yielding GlcNAc-P-P-dolichol embedded in the cytoplasmic leaflet of the endoplasmic reticulum membrane. The protein is UDP-N-acetylglucosamine--dolichyl-phosphate N-acetylglucosaminephosphotransferase (NAGT) of Leishmania amazonensis.